Here is a 499-residue protein sequence, read N- to C-terminus: Inosine-5'-monophosphate dehydrogenase (499 aa).

2 consecutive CBS domains span residues 106–165 and 169–225; these read IDRE…SDAV and MTDE…GSAA. Residues Asp260 and 308-310 each bind NAD(+); that span reads GIG. Residues Gly310 and Gly312 each coordinate K(+). Ser313 provides a ligand contact to IMP. Cys315 serves as a coordination point for K(+). Cys315 acts as the Thioimidate intermediate in catalysis. IMP contacts are provided by residues 348–350, 371–372, and 395–399; these read DGG, GS, and YRGMG. Arg411 acts as the Proton acceptor in catalysis. An IMP-binding site is contributed by Glu425. Glu479, Gly480, and His481 together coordinate K(+). Positions 480 to 499 are disordered; it reads GHPHDVMITDEAPNYSPQGE.

Belongs to the IMPDH/GMPR family. Homotetramer. K(+) serves as cofactor.

The enzyme catalyses IMP + NAD(+) + H2O = XMP + NADH + H(+). It participates in purine metabolism; XMP biosynthesis via de novo pathway; XMP from IMP: step 1/1. Mycophenolic acid (MPA) is a non-competitive inhibitor that prevents formation of the closed enzyme conformation by binding to the same site as the amobile flap. In contrast, mizoribine monophosphate (MZP) is a competitive inhibitor that induces the closed conformation. MPA is a potent inhibitor of mammalian IMPDHs but a poor inhibitor of the bacterial enzymes. MZP is a more potent inhibitor of bacterial IMPDH. In terms of biological role, catalyzes the conversion of inosine 5'-phosphate (IMP) to xanthosine 5'-phosphate (XMP), the first committed and rate-limiting step in the de novo synthesis of guanine nucleotides, and therefore plays an important role in the regulation of cell growth. In Halobacterium salinarum (strain ATCC 700922 / JCM 11081 / NRC-1) (Halobacterium halobium), this protein is Inosine-5'-monophosphate dehydrogenase.